The following is a 208-amino-acid chain: MLKFIEHTGVVAPLDISNVDTDAIIPKQFLKGINKKGFGKFLFHDWRYLDSNQLKINNKFILNKKIYENASILLTKKNFGCGSSREHAVWSLLDYGFKVIVASSFSDIFYNNSFNNKLLLITLDEKKIDSIFDIVKKNLGINISINLLTNKVIINQKTFFFKLDEFRRVCFLNDIDHIDLTMNSLKKINVYENNIPFFLLNRKEFKSH.

It belongs to the LeuD family. LeuD type 1 subfamily. In terms of assembly, heterodimer of LeuC and LeuD.

The enzyme catalyses (2R,3S)-3-isopropylmalate = (2S)-2-isopropylmalate. Its pathway is amino-acid biosynthesis; L-leucine biosynthesis; L-leucine from 3-methyl-2-oxobutanoate: step 2/4. In terms of biological role, catalyzes the isomerization between 2-isopropylmalate and 3-isopropylmalate, via the formation of 2-isopropylmaleate. The sequence is that of 3-isopropylmalate dehydratase small subunit (leuD) from Buchnera aphidicola subsp. Diuraphis noxia.